The following is a 779-amino-acid chain: Mesenchyme-specific cell surface glycoprotein (779 aa).

An N-terminal signal peptide occupies residues 1-15 (MQFGVPLLVLCLALG). Asn-203 and Asn-234 each carry an N-linked (GlcNAc...) asparagine glycan. The tract at residues 249-363 (AGFPRGTTWS…QYPMIPTTPL (115 aa)) is disordered. The segment covering 262–351 (GAGGQGGQGQ…GGQGGQGGGN (90 aa)) has biased composition (gly residues). N-linked (GlcNAc...) asparagine glycosylation is found at Asn-369, Asn-451, and Asn-609.

Restricted to the primary mesenchyme cell lineage.

Its subcellular location is the cell membrane. In terms of biological role, not known. Could be involved in mesenchyme cell migration, adhesion, fusion, or spicule formation. This Strongylocentrotus purpuratus (Purple sea urchin) protein is Mesenchyme-specific cell surface glycoprotein.